Reading from the N-terminus, the 386-residue chain is MDSRDIPPSHNQLQPPPGMLMSHYRNPNAAASPLMVPTSTSQPIQHPRLPFGNQQQSQTFHQQQQQQMDQKTLESLGFGDGSPSSQPMRFGIDDQNQQLQVKKKRGRPRKYTPDGSIALGLAPTSPLLSAASNSYGEGGVGDSGGNGNSVDPPVKRNRGRPPGSSKKQLDALGGTSGVGFTPHVIEVNTGEDIASKVMAFSDQGSRTICILSASGAVSRVMLRQASHSSGIVTYEGRFEIITLSGSVLNYEVNGSTNRSGNLSVALAGPDGGIVGGSVVGNLVAATQVQVIVGSFVAEAKKPKQSSVNIARGQNPEPASAPANMLNFGSVSQGPSSESSEENESGSPAMHRDNNNGIYGAQQQQQQQPLHPHQMQMYQHLWSNHGQ.

2 disordered regions span residues 1-175 and 303-372; these read MDSR…LGGT and KQSS…LHPH. Residues 54–70 are compositionally biased toward low complexity; it reads QQQSQTFHQQQQQQMDQ. Basic residues predominate over residues 101-110; sequence VKKKRGRPRK. The short motif at 102–110 is the Bipartite nuclear localization signal element; it reads KKKRGRPRK. The segment at residues 102–114 is a DNA-binding region (a.T hook 1); that stretch reads KKKRGRPRKYTPD. Polar residues predominate over residues 126–135; that stretch reads PLLSAASNSY. Residues 136-147 are compositionally biased toward gly residues; sequence GEGGVGDSGGNG. Positions 155-167 form a DNA-binding region, a.T hook 2; sequence KRNRGRPPGSSKK. The PPC domain maps to 174–316; that stretch reads GTSGVGFTPH…VNIARGQNPE (143 aa). 2 stretches are compositionally biased toward low complexity: residues 328 to 337 and 361 to 372; these read GSVSQGPSSE and QQQQQQQPLHPH.

Its subcellular location is the nucleus. In terms of biological role, transcription factor that specifically binds AT-rich DNA sequences related to the nuclear matrix attachment regions (MARs). This chain is AT-hook motif nuclear-localized protein 8, found in Arabidopsis thaliana (Mouse-ear cress).